A 535-amino-acid polypeptide reads, in one-letter code: Cytochrome P450 4c3 (535 aa).

Heme-binding residues include Glu-342 and Cys-481.

The protein belongs to the cytochrome P450 family. The cofactor is heme.

It is found in the endoplasmic reticulum membrane. The protein resides in the microsome membrane. May be involved in the metabolism of insect hormones and in the breakdown of synthetic insecticides. This Drosophila melanogaster (Fruit fly) protein is Cytochrome P450 4c3 (Cyp4c3).